Consider the following 513-residue polypeptide: Na(+)/H(+) antiporter NhaB (513 aa).

The next 12 membrane-spanning stretches (helical) occupy residues 21–41 (ICIIAFLVINPLIYFFISPFV), 64–84 (QPGGLLAIEAVFIGMTSAHHV), 88–108 (IMANFEVILLLMFMVAGIYFM), 119–139 (LLIVIHSKKILSLAFCLSATF), 143–163 (FLDALTVIAVIISVGTGFYGV), 202–222 (LLMHAAVGSALGGVMTMVGEP), 243–263 (LPVSLPVLICGVITCLLLEHF), 299–318 (MGIQALAGIWLVVGLALHLA), 322–344 (IIGLTIIIICTAFCGITDEHAIG), 350–370 (PMPFTALIVVFFTVVAVIVDL), 389–409 (LALFYVFNGLLSMISDNVFVG), and 477–497 (MALPYTIVLSIIGFLSLEFLL).

The protein belongs to the NhaB Na(+)/H(+) (TC 2.A.34) antiporter family.

The protein localises to the cell inner membrane. It catalyses the reaction 2 Na(+)(in) + 3 H(+)(out) = 2 Na(+)(out) + 3 H(+)(in). Functionally, na(+)/H(+) antiporter that extrudes sodium in exchange for external protons. This is Na(+)/H(+) antiporter NhaB from Actinobacillus pleuropneumoniae serotype 3 (strain JL03).